A 23-amino-acid polypeptide reads, in one-letter code: Caerulein precursor fragment BM2 (23 aa).

Expressed by the skin glands.

Its subcellular location is the secreted. Antimicrobial peptide. In Xenopus boumbaensis (Mawa clawed frog), this protein is Caerulein precursor fragment BM2.